The chain runs to 243 residues: Small ribosomal subunit protein uS2 (243 aa).

This sequence belongs to the universal ribosomal protein uS2 family.

This Pseudoalteromonas atlantica (strain T6c / ATCC BAA-1087) protein is Small ribosomal subunit protein uS2.